We begin with the raw amino-acid sequence, 348 residues long: Phenylalanine--tRNA ligase alpha subunit (348 aa).

Glu-268 is a binding site for Mg(2+).

It belongs to the class-II aminoacyl-tRNA synthetase family. Phe-tRNA synthetase alpha subunit type 1 subfamily. As to quaternary structure, tetramer of two alpha and two beta subunits. Mg(2+) serves as cofactor.

Its subcellular location is the cytoplasm. It catalyses the reaction tRNA(Phe) + L-phenylalanine + ATP = L-phenylalanyl-tRNA(Phe) + AMP + diphosphate + H(+). In Bordetella bronchiseptica (strain ATCC BAA-588 / NCTC 13252 / RB50) (Alcaligenes bronchisepticus), this protein is Phenylalanine--tRNA ligase alpha subunit.